A 702-amino-acid chain; its full sequence is Phosphate acetyltransferase (702 aa).

The segment at 375 to 702 is phosphate acetyltransferase; it reads AFRYELIQRA…QATQSAADCG (328 aa).

In the N-terminal section; belongs to the CobB/CobQ family. This sequence in the C-terminal section; belongs to the phosphate acetyltransferase and butyryltransferase family. In terms of assembly, homohexamer.

The protein resides in the cytoplasm. The enzyme catalyses acetyl-CoA + phosphate = acetyl phosphate + CoA. Its pathway is metabolic intermediate biosynthesis; acetyl-CoA biosynthesis; acetyl-CoA from acetate: step 2/2. Functionally, involved in acetate metabolism. The sequence is that of Phosphate acetyltransferase (pta) from Deinococcus radiodurans (strain ATCC 13939 / DSM 20539 / JCM 16871 / CCUG 27074 / LMG 4051 / NBRC 15346 / NCIMB 9279 / VKM B-1422 / R1).